Reading from the N-terminus, the 307-residue chain is Protein FAM76A (307 aa).

2 disordered regions span residues 161–181 (SRLS…SSIQ) and 287–307 (KQAA…ITSP). The stretch at 217 to 297 (IIAQLKEEVA…QAAALSKGKK (81 aa)) forms a coiled coil.

Belongs to the FAM76 family.

This Gallus gallus (Chicken) protein is Protein FAM76A (FAM76A).